Consider the following 477-residue polypeptide: UDP-N-acetylmuramate--L-alanine ligase (477 aa).

122–128 serves as a coordination point for ATP; it reads GTHGKTT.

This sequence belongs to the MurCDEF family.

It is found in the cytoplasm. The enzyme catalyses UDP-N-acetyl-alpha-D-muramate + L-alanine + ATP = UDP-N-acetyl-alpha-D-muramoyl-L-alanine + ADP + phosphate + H(+). It participates in cell wall biogenesis; peptidoglycan biosynthesis. Functionally, cell wall formation. This is UDP-N-acetylmuramate--L-alanine ligase from Xanthomonas oryzae pv. oryzae (strain MAFF 311018).